We begin with the raw amino-acid sequence, 131 residues long: Glycine cleavage system H protein (131 aa).

Residues 24–106 (TVRVGITDYA…YGEGWLVDLR (83 aa)) enclose the Lipoyl-binding domain. N6-lipoyllysine is present on lysine 65.

It belongs to the GcvH family. As to quaternary structure, the glycine cleavage system is composed of four proteins: P, T, L and H. (R)-lipoate serves as cofactor.

Functionally, the glycine cleavage system catalyzes the degradation of glycine. The H protein shuttles the methylamine group of glycine from the P protein to the T protein. This is Glycine cleavage system H protein from Mycolicibacterium smegmatis (strain ATCC 700084 / mc(2)155) (Mycobacterium smegmatis).